Here is a 418-residue protein sequence, read N- to C-terminus: Putative competence-damage inducible protein (418 aa).

This sequence belongs to the CinA family.

The chain is Putative competence-damage inducible protein from Streptococcus pneumoniae serotype 19F (strain G54).